The following is a 221-amino-acid chain: Urease accessory protein UreF (221 aa).

It belongs to the UreF family. In terms of assembly, ureD, UreF and UreG form a complex that acts as a GTP-hydrolysis-dependent molecular chaperone, activating the urease apoprotein by helping to assemble the nickel containing metallocenter of UreC. The UreE protein probably delivers the nickel.

It is found in the cytoplasm. Its function is as follows. Required for maturation of urease via the functional incorporation of the urease nickel metallocenter. This is Urease accessory protein UreF from Aliivibrio fischeri (strain MJ11) (Vibrio fischeri).